We begin with the raw amino-acid sequence, 312 residues long: uncharacterized protein (312 aa).

This sequence belongs to the asfivirus CP312R family.

It is found in the virion. This is an uncharacterized protein from African swine fever virus (strain Badajoz 1971 Vero-adapted) (Ba71V).